The sequence spans 139 residues: D-ribose pyranase (139 aa).

Residue H20 is the Proton donor of the active site. Substrate-binding positions include D28, H106, and 128–130 (YAN).

This sequence belongs to the RbsD / FucU family. RbsD subfamily. As to quaternary structure, homodecamer.

It is found in the cytoplasm. It carries out the reaction beta-D-ribopyranose = beta-D-ribofuranose. The protein operates within carbohydrate metabolism; D-ribose degradation; D-ribose 5-phosphate from beta-D-ribopyranose: step 1/2. Functionally, catalyzes the interconversion of beta-pyran and beta-furan forms of D-ribose. This Histophilus somni (strain 2336) (Haemophilus somnus) protein is D-ribose pyranase.